Here is a 98-residue protein sequence, read N- to C-terminus: NADH-ubiquinone oxidoreductase chain 4L (98 aa).

Helical transmembrane passes span 1 to 21 (MSPV…GLAF), 26 to 46 (LLSA…AIAL), and 61 to 81 (MILL…LVAA).

Belongs to the complex I subunit 4L family.

Its subcellular location is the mitochondrion membrane. The catalysed reaction is a ubiquinone + NADH + 5 H(+)(in) = a ubiquinol + NAD(+) + 4 H(+)(out). Its function is as follows. Core subunit of the mitochondrial membrane respiratory chain NADH dehydrogenase (Complex I) which catalyzes electron transfer from NADH through the respiratory chain, using ubiquinone as an electron acceptor. Part of the enzyme membrane arm which is embedded in the lipid bilayer and involved in proton translocation. The chain is NADH-ubiquinone oxidoreductase chain 4L (MT-ND4L) from Squalus acanthias (Spiny dogfish).